A 259-amino-acid polypeptide reads, in one-letter code: ATP synthase subunit a (259 aa).

5 consecutive transmembrane segments (helical) span residues 29–49 (TVNIDSMVFSVVLGTLFIWLF), 89–109 (LIAPLALTIFVWIFLMNAMDL), 132–154 (SADVNITLSMALGVFFLILFYSI), 209–229 (IFILIAAMLPWWSQWFLNVPW), and 230–250 (AIFHILIITLQAFIFMVLTIV).

The protein belongs to the ATPase A chain family. As to quaternary structure, F-type ATPases have 2 components, CF(1) - the catalytic core - and CF(0) - the membrane proton channel. CF(1) has five subunits: alpha(3), beta(3), gamma(1), delta(1), epsilon(1). CF(0) has three main subunits: a(1), b(2) and c(9-12). The alpha and beta chains form an alternating ring which encloses part of the gamma chain. CF(1) is attached to CF(0) by a central stalk formed by the gamma and epsilon chains, while a peripheral stalk is formed by the delta and b chains.

It is found in the cell inner membrane. In terms of biological role, key component of the proton channel; it plays a direct role in the translocation of protons across the membrane. The polypeptide is ATP synthase subunit a (Tolumonas auensis (strain DSM 9187 / NBRC 110442 / TA 4)).